We begin with the raw amino-acid sequence, 633 residues long: Molybdenum cofactor biosynthesis protein 1 (633 aa).

Residues 1-380 (MAAQPVSRVV…QMKNRPMILI (380 aa)) are molybdenum cofactor biosynthesis protein A. A Phosphoserine modification is found at serine 61. The Radical SAM core domain occupies 61–295 (SFGRHHSYLR…AKAFKIPGFR (235 aa)). Arginine 70 contributes to the GTP binding site. [4Fe-4S] cluster is bound by residues cysteine 77 and cysteine 81. Tyrosine 83 lines the S-adenosyl-L-methionine pocket. Cysteine 84 serves as a coordination point for [4Fe-4S] cluster. GTP is bound at residue arginine 120. S-adenosyl-L-methionine is bound at residue glycine 124. Residue threonine 151 participates in GTP binding. An S-adenosyl-L-methionine-binding site is contributed by serine 175. Lysine 195 bears the N6-acetyllysine mark. Lysine 212 provides a ligand contact to GTP. S-adenosyl-L-methionine is bound at residue methionine 246. Residues cysteine 309 and cysteine 312 each contribute to the [4Fe-4S] cluster site. 314 to 316 (RLR) lines the GTP pocket. [4Fe-4S] cluster is bound at residue cysteine 326. Residues 410–633 (VSFSSQMVTL…GGQRGDFHRT (224 aa)) form a molybdenum cofactor biosynthesis protein C region. Residues 446-480 (SSHLDSDANPKCLSPTEPQAPAASSGPLPDSDQLT) form a disordered region. Lysine 525 carries the N6-acetyllysine modification. Aspartate 603 serves as the catalytic For molybdenum cofactor biosynthesis protein C activity.

This sequence in the C-terminal section; belongs to the MoaC family. In the N-terminal section; belongs to the radical SAM superfamily. MoaA family. As to quaternary structure, isoform MOCS1A and isoform MOCS1B probably form a heterooligomer. Requires [4Fe-4S] cluster as cofactor.

It catalyses the reaction GTP + AH2 + S-adenosyl-L-methionine = (8S)-3',8-cyclo-7,8-dihydroguanosine 5'-triphosphate + 5'-deoxyadenosine + L-methionine + A + H(+). It carries out the reaction (8S)-3',8-cyclo-7,8-dihydroguanosine 5'-triphosphate = cyclic pyranopterin phosphate + diphosphate. It functions in the pathway cofactor biosynthesis; molybdopterin biosynthesis. Isoform MOCS1A and isoform MOCS1B probably form a complex that catalyzes the conversion of 5'-GTP to cyclic pyranopterin monophosphate (cPMP). MOCS1A catalyzes the cyclization of GTP to (8S)-3',8-cyclo-7,8-dihydroguanosine 5'-triphosphate and MOCS1B catalyzes the subsequent conversion of (8S)-3',8-cyclo-7,8-dihydroguanosine 5'-triphosphate to cPMP. The polypeptide is Molybdenum cofactor biosynthesis protein 1 (MOCS1) (Bos taurus (Bovine)).